The following is a 66-amino-acid chain: Pteroicidin-alpha (66 aa).

Positions 1–22 are cleaved as a signal peptide; that stretch reads MKCIALFLVLSMVVLMAEPGEA. Arg43 carries the post-translational modification Arginine amide; partial. A propeptide spanning residues 44 to 66 is cleaved from the precursor; it reads GKNRDMAEQQELERAFDRERAFA.

This sequence belongs to the pleurocidin family. Post-translationally, this peptide exists in N-terminally amidated and non-amidated forms. The amidated form is more active and has a greater alpha-helix content than the non-amidated form. As to expression, expressed in gill, skin, intestine, spleen, anterior kidney, and blood cells.

It is found in the secreted. Its function is as follows. The amidated peptide is bactericidal on human pathogens like S.aureus or E.coli, as well as on the fish pathogen A.salmonicida. May also be active against a variety of fungi. It can kill bacteria in less than 30 minutes (S.aureus) and 120 minutes (V.vulnificus). It induces hemolysis of erythrocytes from human and fishes (sea bass and lesser-spotted dogfish). In terms of biological role, the non-amidated peptide only inhibits growth of human pathogens like S.aureus or E.coli, and the fish pathogen A.salmonicida. Induces hemolysis of erythrocytes from human and fishes (sea bass and lesser-spotted dogfish). The protein is Pteroicidin-alpha of Pterois volitans (Red lionfish).